A 604-amino-acid chain; its full sequence is Serine/threonine-protein phosphatase 2B catalytic subunit A2 (604 aa).

A disordered region spans residues 21–48 (NKTERPQSSTTPIDSKASTVAAANSTAT). At Thr31 the chain carries Phosphothreonine. A compositionally biased stretch (low complexity) spans 35 to 48 (SKASTVAAANSTAT). Fe cation is bound by residues Asp144, His146, and Asp172. Residues Asp172 and Asn204 each coordinate Zn(2+). Residue His205 is the Proton donor of the active site. Zn(2+) is bound by residues His253 and His359. The disordered stretch occupies residues 470 to 497 (KKLPQAGKSEATPQPATSASPKHASILD). Polar residues predominate over residues 480–489 (ATPQPATSAS). A phosphoserine mark is found at Ser489 and Ser520. The tract at residues 501-523 (RRKALRNKILAVAKVSRMYSVLR) is calmodulin-binding.

It belongs to the PPP phosphatase family. PP-2B subfamily. Composed of two components (A and B), the A component is the catalytic subunit and the B component confers calcium sensitivity. Fe(3+) serves as cofactor. Requires Zn(2+) as cofactor.

The catalysed reaction is O-phospho-L-seryl-[protein] + H2O = L-seryl-[protein] + phosphate. It catalyses the reaction O-phospho-L-threonyl-[protein] + H2O = L-threonyl-[protein] + phosphate. In terms of biological role, calcium-dependent, calmodulin-stimulated protein phosphatase. This subunit may have a role in the calmodulin activation of calcineurin. In Saccharomyces cerevisiae (strain ATCC 204508 / S288c) (Baker's yeast), this protein is Serine/threonine-protein phosphatase 2B catalytic subunit A2 (CMP2).